We begin with the raw amino-acid sequence, 769 residues long: Polyribonucleotide nucleotidyltransferase (769 aa).

Aspartate 490 and aspartate 496 together coordinate Mg(2+). A KH domain is found at proline 557–isoleucine 616. Residues glycine 626 to arginine 694 form the S1 motif domain. Residues proline 700–asparagine 734 are compositionally biased toward basic and acidic residues. Residues proline 700 to glutamate 769 are disordered. A compositionally biased stretch (low complexity) spans asparagine 736–serine 746. Basic and acidic residues predominate over residues phenylalanine 747–glutamate 769.

Belongs to the polyribonucleotide nucleotidyltransferase family. The cofactor is Mg(2+).

The protein resides in the cytoplasm. The catalysed reaction is RNA(n+1) + phosphate = RNA(n) + a ribonucleoside 5'-diphosphate. Involved in mRNA degradation. Catalyzes the phosphorolysis of single-stranded polyribonucleotides processively in the 3'- to 5'-direction. This Lactococcus lactis subsp. cremoris (strain SK11) protein is Polyribonucleotide nucleotidyltransferase.